The primary structure comprises 337 residues: 6-phosphogluconolactonase (337 aa).

Belongs to the cycloisomerase 2 family.

The enzyme catalyses 6-phospho-D-glucono-1,5-lactone + H2O = 6-phospho-D-gluconate + H(+). The protein operates within carbohydrate degradation; pentose phosphate pathway; D-ribulose 5-phosphate from D-glucose 6-phosphate (oxidative stage): step 2/3. Catalyzes the hydrolysis of 6-phosphogluconolactone to 6-phosphogluconate. In Blochmanniella pennsylvanica (strain BPEN), this protein is 6-phosphogluconolactonase.